The primary structure comprises 92 residues: Long neurotoxin 3FTx-Oxy2 (92 aa).

The N-terminal stretch at 1–21 is a signal peptide; the sequence is MKTLLLTLVVVTIVCLDLGYT. Cystine bridges form between cysteine 24/cysteine 42, cysteine 35/cysteine 63, cysteine 67/cysteine 79, and cysteine 80/cysteine 85.

Belongs to the three-finger toxin family. Long-chain subfamily. Type II alpha-neurotoxin sub-subfamily. In terms of tissue distribution, expressed by the venom gland.

Its subcellular location is the secreted. Binds with high affinity to muscular (alpha-1/CHRNA1) and neuronal (alpha-7/CHRNA7) nicotinic acetylcholine receptor (nAChR) and inhibits acetylcholine from binding to the receptor, thereby impairing neuromuscular and neuronal transmission. This is Long neurotoxin 3FTx-Oxy2 from Oxyuranus microlepidotus (Inland taipan).